The chain runs to 304 residues: Serine/threonine-protein phosphatase PP1 isozyme 3 (304 aa).

The Mn(2+) site is built by Asp61, His63, Asp89, and Asn121. Catalysis depends on His122, which acts as the Proton donor. His170 and His245 together coordinate Mn(2+).

It belongs to the PPP phosphatase family. PP-1 subfamily. Mn(2+) is required as a cofactor.

It carries out the reaction O-phospho-L-seryl-[protein] + H2O = L-seryl-[protein] + phosphate. The enzyme catalyses O-phospho-L-threonyl-[protein] + H2O = L-threonyl-[protein] + phosphate. This chain is Serine/threonine-protein phosphatase PP1 isozyme 3 (NPP3), found in Nicotiana tabacum (Common tobacco).